A 30-amino-acid polypeptide reads, in one-letter code: Trypsin inhibitor 2 (30 aa).

Cystine bridges form between Cys3/Cys20, Cys10/Cys22, and Cys16/Cys29.

Belongs to the protease inhibitor I7 (squash-type serine protease inhibitor) family.

It localises to the secreted. Inhibits trypsin. The polypeptide is Trypsin inhibitor 2 (Luffa aegyptiaca (Sponge gourd)).